We begin with the raw amino-acid sequence, 146 residues long: Large ribosomal subunit protein uL15 (146 aa).

Residues 1–18 (MKLHELKAAEGTRKERNR) show a composition bias toward basic and acidic residues. The interval 1-58 (MKLHELKAAEGTRKERNRVGRGMSSGNGKTSGRGHKGQKARSGGGVRPGFEGGQMPLF) is disordered. The span at 42–52 (SGGGVRPGFEG) shows a compositional bias: gly residues.

This sequence belongs to the universal ribosomal protein uL15 family. In terms of assembly, part of the 50S ribosomal subunit.

Binds to the 23S rRNA. The sequence is that of Large ribosomal subunit protein uL15 from Oceanobacillus iheyensis (strain DSM 14371 / CIP 107618 / JCM 11309 / KCTC 3954 / HTE831).